The chain runs to 227 residues: UPF0758 protein Dhaf_4352 (227 aa).

The region spanning 105 to 227 (VINSPQDIAH…YISLKERGIL (123 aa)) is the MPN domain. Zn(2+) contacts are provided by His176, His178, and Asp189. Positions 176–189 (HNHPSGDPTPSSED) match the JAMM motif motif.

It belongs to the UPF0758 family.

In Desulfitobacterium hafniense (strain DSM 10664 / DCB-2), this protein is UPF0758 protein Dhaf_4352.